Consider the following 316-residue polypeptide: HPr kinase/phosphorylase (316 aa).

Catalysis depends on residues His143 and Lys164. 158-165 (GEAGSGKS) lines the ATP pocket. Residue Ser165 coordinates Mg(2+). Asp182 (proton acceptor; for phosphorylation activity. Proton donor; for dephosphorylation activity) is an active-site residue. Residues 206-215 (LEVRGLGVLN) are important for the catalytic mechanism of both phosphorylation and dephosphorylation. Glu207 is a binding site for Mg(2+). The active site involves Arg251. Residues 272–277 (PVMPGR) are important for the catalytic mechanism of dephosphorylation.

Belongs to the HPrK/P family. In terms of assembly, homohexamer. Requires Mg(2+) as cofactor.

It catalyses the reaction [HPr protein]-L-serine + ATP = [HPr protein]-O-phospho-L-serine + ADP + H(+). The enzyme catalyses [HPr protein]-O-phospho-L-serine + phosphate + H(+) = [HPr protein]-L-serine + diphosphate. In terms of biological role, catalyzes the ATP- as well as the pyrophosphate-dependent phosphorylation of a specific serine residue in HPr, a phosphocarrier protein of the phosphoenolpyruvate-dependent sugar phosphotransferase system (PTS). HprK/P also catalyzes the pyrophosphate-producing, inorganic phosphate-dependent dephosphorylation (phosphorolysis) of seryl-phosphorylated HPr (P-Ser-HPr). This Xylella fastidiosa (strain 9a5c) protein is HPr kinase/phosphorylase.